Reading from the N-terminus, the 345-residue chain is Nicotinate-nucleotide--dimethylbenzimidazole phosphoribosyltransferase (345 aa).

Residue glutamate 311 is the Proton acceptor of the active site.

This sequence belongs to the CobT family.

It carries out the reaction 5,6-dimethylbenzimidazole + nicotinate beta-D-ribonucleotide = alpha-ribazole 5'-phosphate + nicotinate + H(+). Its pathway is nucleoside biosynthesis; alpha-ribazole biosynthesis; alpha-ribazole from 5,6-dimethylbenzimidazole: step 1/2. Catalyzes the synthesis of alpha-ribazole-5'-phosphate from nicotinate mononucleotide (NAMN) and 5,6-dimethylbenzimidazole (DMB). The protein is Nicotinate-nucleotide--dimethylbenzimidazole phosphoribosyltransferase of Janthinobacterium sp. (strain Marseille) (Minibacterium massiliensis).